A 226-amino-acid polypeptide reads, in one-letter code: Putative mitochondrial outer membrane protein porin 5 (226 aa).

Belongs to the eukaryotic mitochondrial porin (TC 1.B.8.1) family.

The protein resides in the mitochondrion outer membrane. Putative channel that allows diffusion of small hydrophilic molecules through membranes. This is Putative mitochondrial outer membrane protein porin 5 (VDAC5) from Arabidopsis thaliana (Mouse-ear cress).